The primary structure comprises 590 residues: Methionine--tRNA ligase, mitochondrial (590 aa).

The transit peptide at 1 to 26 (MRTRFLFLTSGCKAVPELHKIVLANA) directs the protein to the mitochondrion. The 'HIGH' region signature appears at 51–61 (FYVNASPHLGH). A 'KMSKS' region motif is present at residues 342-346 (KMSKS). ATP is bound at residue K345. The tract at residues 570–590 (LESQRADQQKNRKMEKGSNLK) is disordered. A compositionally biased stretch (basic and acidic residues) spans 571–590 (ESQRADQQKNRKMEKGSNLK).

The protein belongs to the class-I aminoacyl-tRNA synthetase family.

Its subcellular location is the mitochondrion matrix. The catalysed reaction is tRNA(Met) + L-methionine + ATP = L-methionyl-tRNA(Met) + AMP + diphosphate. The chain is Methionine--tRNA ligase, mitochondrial (mars2) from Takifugu rubripes (Japanese pufferfish).